A 279-amino-acid chain; its full sequence is Putative pyruvate, phosphate dikinase regulatory protein (279 aa).

Position 153–160 (153–160) interacts with ADP; it reads GVSRTSKT.

It belongs to the pyruvate, phosphate/water dikinase regulatory protein family. PDRP subfamily.

The catalysed reaction is N(tele)-phospho-L-histidyl/L-threonyl-[pyruvate, phosphate dikinase] + ADP = N(tele)-phospho-L-histidyl/O-phospho-L-threonyl-[pyruvate, phosphate dikinase] + AMP + H(+). It carries out the reaction N(tele)-phospho-L-histidyl/O-phospho-L-threonyl-[pyruvate, phosphate dikinase] + phosphate + H(+) = N(tele)-phospho-L-histidyl/L-threonyl-[pyruvate, phosphate dikinase] + diphosphate. Bifunctional serine/threonine kinase and phosphorylase involved in the regulation of the pyruvate, phosphate dikinase (PPDK) by catalyzing its phosphorylation/dephosphorylation. The sequence is that of Putative pyruvate, phosphate dikinase regulatory protein from Rhodopseudomonas palustris (strain ATCC BAA-98 / CGA009).